Here is a 467-residue protein sequence, read N- to C-terminus: UDP-N-acetylmuramoylalanine--D-glutamate ligase (467 aa).

121–127 (GTNGKST) lines the ATP pocket.

It belongs to the MurCDEF family.

It localises to the cytoplasm. The catalysed reaction is UDP-N-acetyl-alpha-D-muramoyl-L-alanine + D-glutamate + ATP = UDP-N-acetyl-alpha-D-muramoyl-L-alanyl-D-glutamate + ADP + phosphate + H(+). It participates in cell wall biogenesis; peptidoglycan biosynthesis. Its function is as follows. Cell wall formation. Catalyzes the addition of glutamate to the nucleotide precursor UDP-N-acetylmuramoyl-L-alanine (UMA). The chain is UDP-N-acetylmuramoylalanine--D-glutamate ligase from Chelativorans sp. (strain BNC1).